A 431-amino-acid chain; its full sequence is Galactose-3-O-sulfotransferase 3 (431 aa).

Over 1 to 19 (MPPILQRLQQSTKMMSHRK) the chain is Cytoplasmic. A helical; Signal-anchor for type II membrane protein transmembrane segment spans residues 20 to 40 (ILLLVLGCSTVSLLIHQGSQL). The Lumenal segment spans residues 41–431 (SWYPKLFPLS…RALPRIPQGT (391 aa)). N-linked (GlcNAc...) asparagine glycans are attached at residues N91, N110, N177, and N302. The tract at residues 400–431 (KRRGGVRSRPESVLDNPPPRPIRALPRIPQGT) is disordered. Residues 421 to 431 (IRALPRIPQGT) show a composition bias toward low complexity.

The protein belongs to the galactose-3-O-sulfotransferase family. Requires Mg(2+) as cofactor.

It is found in the golgi apparatus. The protein localises to the golgi stack membrane. It participates in protein modification; carbohydrate sulfation. Its function is as follows. Transfers a sulfate to position 3 of non-reducing beta-galactosyl residues in N-glycans and core2-branched O-glycans. Has high activity towards Gal-beta-1,4-GlcNAc, Gal-beta-1,4(Fuc-alpha-1,3)GlcNAc and lower activity towards Gal-beta-1,3(Fuc-alpha-1,4)GlcNAc. The sequence is that of Galactose-3-O-sulfotransferase 3 (Gal3st3) from Mus musculus (Mouse).